The following is a 162-amino-acid chain: uncharacterized protein (162 aa).

This is an uncharacterized protein from Frog virus 3 (isolate Goorha) (FV-3).